The chain runs to 130 residues: Small ribosomal subunit protein uS11 (130 aa).

It belongs to the universal ribosomal protein uS11 family. Part of the 30S ribosomal subunit. Interacts with proteins S7 and S18. Binds to IF-3.

Located on the platform of the 30S subunit, it bridges several disparate RNA helices of the 16S rRNA. Forms part of the Shine-Dalgarno cleft in the 70S ribosome. The protein is Small ribosomal subunit protein uS11 of Latilactobacillus sakei subsp. sakei (strain 23K) (Lactobacillus sakei subsp. sakei).